We begin with the raw amino-acid sequence, 188 residues long: dCTP deaminase (188 aa).

DCTP contacts are provided by residues 111-116 (KSTYAR), 135-137 (TLE), Q156, Y170, and Q180. The active-site Proton donor/acceptor is the E137.

The protein belongs to the dCTP deaminase family. As to quaternary structure, homotrimer.

It carries out the reaction dCTP + H2O + H(+) = dUTP + NH4(+). It participates in pyrimidine metabolism; dUMP biosynthesis; dUMP from dCTP (dUTP route): step 1/2. Catalyzes the deamination of dCTP to dUTP. This Laribacter hongkongensis (strain HLHK9) protein is dCTP deaminase.